The primary structure comprises 241 residues: Carboxy-S-adenosyl-L-methionine synthase (241 aa).

Residues Y38, 63-65 (GCS), 88-89 (DN), 116-117 (DI), N131, and R198 contribute to the S-adenosyl-L-methionine site.

This sequence belongs to the class I-like SAM-binding methyltransferase superfamily. Cx-SAM synthase family. In terms of assembly, homodimer.

The enzyme catalyses prephenate + S-adenosyl-L-methionine = carboxy-S-adenosyl-L-methionine + 3-phenylpyruvate + H2O. Its function is as follows. Catalyzes the conversion of S-adenosyl-L-methionine (SAM) to carboxy-S-adenosyl-L-methionine (Cx-SAM). This Actinobacillus pleuropneumoniae serotype 5b (strain L20) protein is Carboxy-S-adenosyl-L-methionine synthase.